Here is an 836-residue protein sequence, read N- to C-terminus: Neuroligin-2 (836 aa).

The signal sequence occupies residues 1–14; the sequence is MWLLALCLVGLAGA. At 15–678 the chain is on the extracellular side; it reads QRGGGGPGGG…DSRDYSTELS (664 aa). N-linked (GlcNAc...) asparagine glycosylation is found at N98 and N136. Disulfide bonds link C106–C141, C317–C328, and C487–C521. N-linked (GlcNAc...) asparagine glycosylation is present at N522. Residues 623–661 are disordered; the sequence is PPYATRWPPRTPGPGTSGTRRPPPPATLPPESDIDLGPR. A helical membrane pass occupies residues 679-699; it reads VTVAVGASLLFLNILAFAALY. Positions 679 to 699 are required for interaction with LHFPL4; that stretch reads VTVAVGASLLFLNILAFAALY. The Cytoplasmic portion of the chain corresponds to 700-836; the sequence is YKRDRRQELR…LPHPHSTTRV (137 aa). 2 disordered regions span residues 711–735 and 791–836; these read RRLS…TAGR and LLPS…TTRV. A phosphoserine mark is found at S714 and S719. Over residues 717–728 the composition is skewed to gly residues; the sequence is GGSGSGVPGGGP. The segment covering 796–819 has biased composition (pro residues); it reads LGPPPPPPPPSLHPFGPFPPPPPT. Positions 824-836 are enriched in polar residues; that stretch reads NNTLPHPHSTTRV.

It belongs to the type-B carboxylesterase/lipase family. Interacts with neurexins NRXN1, NRXN2 and NRXN3. Interaction with neurexins is mediated by heparan sulfate glycan modification on neurexin. Interacts (via its C-terminus) with DLG4/PSD-95 (via PDZ domain 3). Interacts with PATJ. Interacts with GPHN. Interacts with MDGA1 and MDGA2. Found in a complex with MAGI2 and IGSF9B, where it interacts with MAGI2 (via WW 1, WW 2 and PDZ 2 domains). Identified in a complex of 720 kDa composed of LHFPL4, NLGN2, GABRA1, GABRB2, GABRG2 and GABRB3. Interacts with LHFPL4; leading to mutual regulation of the protein level and synaptic clustering. Interacts with GABRA1. Detected on hippocampus neurons, especially at inhibitory synapses. Detected in retina, in the outer and inner plexiform layer. Detected in pancreas, in islet of Langerhans beta cells (at protein level). Expressed in brain, spinal cord and dorsal root ganglion. Detected in brain, and at lower levels in pancreas islet beta cells.

The protein resides in the cell membrane. It is found in the postsynaptic cell membrane. The protein localises to the presynaptic cell membrane. In terms of biological role, transmembrane scaffolding protein involved in cell-cell interactions via its interactions with neurexin family members. Mediates cell-cell interactions both in neurons and in other types of cells, such as Langerhans beta cells. Plays a role in synapse function and synaptic signal transmission, especially via gamma-aminobutyric acid receptors (GABA(A) receptors). Functions by recruiting and clustering synaptic proteins. Promotes clustering of postsynaptic GABRG2 and GPHN. Promotes clustering of postsynaptic LHFPL4. Modulates signaling by inhibitory synapses, and thereby plays a role in controlling the ratio of signaling by excitatory and inhibitory synapses and information processing. Required for normal signal amplitude from inhibitory synapses, but is not essential for normal signal frequency. May promote the initial formation of synapses, but is not essential for this. In vitro, triggers the de novo formation of presynaptic structures. Mediates cell-cell interactions between Langerhans beta cells and modulates insulin secretion. The polypeptide is Neuroligin-2 (Nlgn2) (Rattus norvegicus (Rat)).